We begin with the raw amino-acid sequence, 391 residues long: DNA/RNA-binding protein KIN17 (391 aa).

The segment at 28-50 (CQMCQKQCRDENGFKCHCMSESH) adopts a C2H2-type zinc-finger fold. A winged helix-turn-helix (wHTH) region spans residues 51–160 (QRQLLLASEN…RQLELEKKKK (110 aa)). Residue Lys-135 is modified to N6,N6,N6-trimethyllysine; by METTL22; alternate. N6-methyllysine; alternate is present on Lys-135. Coiled coils occupy residues 147–180 (ETIRRQLELEKKKKQDLDDEEKTAKFIEEQVRRG) and 252–275 (AKKKKSALDEIMELEEEKKRTART). The interval 206–258 (NLNKGAGGSAGATTSKSSSLGPSALKLLGSAASGKRKESSQSSAQPAKKKKSA) is disordered. A C-terminal subdomain A region spans residues 282 to 332 (GIVVKIITKKLGEKYHKKKGVVKEVIDRYTAVVKMTDSGDRLKLDQTHLET). Residues 338–389 (GKRVLVLNGGYRGNEGTLESINEKAFSATIVIETGPLKGRRVEGIQYEDISK) form a C-terminal subdomain B region.

It belongs to the KIN17 family. As to quaternary structure, associated with DNA polymerase alpha, RFC1 and cyclin A, in multiprotein DNA replication complexes. Also associates with replication origins at the G1/S phase boundary and throughout the S phase in vivo. Highly expressed in transformed mouse AtT20 neuroendocrine cells. Expressed at a lower level in testis, kidney, skeletal muscle, liver, lung, spleen, brain and heart and kidney. In testis, expressed at much higher levels in proliferating cells than in differentiating cells. Not detected in embryo.

Its subcellular location is the nucleus. It localises to the cytoplasm. Its function is as follows. Involved in DNA replication and the cellular response to DNA damage. May participate in DNA replication factories and create a bridge between DNA replication and repair mediated by high molecular weight complexes. May play a role in illegitimate recombination and regulation of gene expression. May participate in mRNA processing. Binds, in vitro, to double-stranded DNA. Also shown to bind preferentially to curved DNA in vitro and in vivo. Binds via its C-terminal domain to RNA in vitro. This is DNA/RNA-binding protein KIN17 from Mus musculus (Mouse).